We begin with the raw amino-acid sequence, 197 residues long: ATP-dependent Clp protease proteolytic subunit (197 aa).

The active-site Nucleophile is the Ser98. His123 is a catalytic residue.

It belongs to the peptidase S14 family. Fourteen ClpP subunits assemble into 2 heptameric rings which stack back to back to give a disk-like structure with a central cavity, resembling the structure of eukaryotic proteasomes.

It is found in the cytoplasm. It catalyses the reaction Hydrolysis of proteins to small peptides in the presence of ATP and magnesium. alpha-casein is the usual test substrate. In the absence of ATP, only oligopeptides shorter than five residues are hydrolyzed (such as succinyl-Leu-Tyr-|-NHMec, and Leu-Tyr-Leu-|-Tyr-Trp, in which cleavage of the -Tyr-|-Leu- and -Tyr-|-Trp bonds also occurs).. In terms of biological role, cleaves peptides in various proteins in a process that requires ATP hydrolysis. Has a chymotrypsin-like activity. Plays a major role in the degradation of misfolded proteins. This Enterococcus faecalis (strain ATCC 700802 / V583) protein is ATP-dependent Clp protease proteolytic subunit.